The sequence spans 353 residues: DNA-directed RNA polymerase subunit alpha (353 aa).

Positions 1-234 are alpha N-terminal domain (alpha-NTD); the sequence is MVQEKVRVST…DLFIPFLHTE (234 aa). The segment at 266 to 353 is alpha C-terminal domain (alpha-CTD); sequence KKIALKSIFI…LAQSIYSESG (88 aa).

It belongs to the RNA polymerase alpha chain family. As to quaternary structure, in plastids the minimal PEP RNA polymerase catalytic core is composed of four subunits: alpha, beta, beta', and beta''. When a (nuclear-encoded) sigma factor is associated with the core the holoenzyme is formed, which can initiate transcription.

Its subcellular location is the plastid. The protein localises to the chloroplast. The catalysed reaction is RNA(n) + a ribonucleoside 5'-triphosphate = RNA(n+1) + diphosphate. In terms of biological role, DNA-dependent RNA polymerase catalyzes the transcription of DNA into RNA using the four ribonucleoside triphosphates as substrates. The chain is DNA-directed RNA polymerase subunit alpha from Panax ginseng (Korean ginseng).